A 583-amino-acid polypeptide reads, in one-letter code: COP9 signalosome complex subunit 10 (583 aa).

Residues 1–35 are compositionally biased toward acidic residues; that stretch reads MSDEEDYAEYMMSEEDMSSFEMDVDSDVEPDDAGL. The segment at 1–55 is disordered; sequence MSDEEDYAEYMMSEEDMSSFEMDVDSDVEPDDAGLEQDQQVTGDDYDGSAGNSGD. The PCI domain maps to 297–485; sequence DHYNQSQMLS…DYVYFGEEYF (189 aa).

Component of a COP9 signalosome-like (CSN) complex.

The protein resides in the cytoplasm. The protein localises to the nucleus. Component of the COP9 signalosome (CSN) complex that acts as an regulator of the ubiquitin (Ubl) conjugation pathway by mediating the deneddylation of the cullin subunit of SCF-type E3 ubiquitin-protein ligase complexes. The CSN complex is involved in the regulation of the mating pheromone response. This chain is COP9 signalosome complex subunit 10 (RRI2), found in Kluyveromyces lactis (strain ATCC 8585 / CBS 2359 / DSM 70799 / NBRC 1267 / NRRL Y-1140 / WM37) (Yeast).